The chain runs to 464 residues: Dihydrolipoyllysine-residue succinyltransferase component of 2-oxoglutarate dehydrogenase complex 1, mitochondrial (464 aa).

The transit peptide at 1–86 (MMLRAVFRRA…TALQRWVRPF (86 aa)) directs the protein to the mitochondrion. The Lipoyl-binding domain occupies 93 to 168 (VVEAVVPHMG…EPGNKVARIS (76 aa)). At Lys134 the chain carries N6-lipoyllysine. Positions 168-242 (STSADAVSHV…DRERRVPMTR (75 aa)) are disordered. A compositionally biased stretch (basic and acidic residues) spans 196–210 (EKPKVESTKVAEKPK). The span at 211 to 220 (APSPPPPPPS) shows a compositional bias: pro residues. Active-site residues include His435 and Asp439.

The protein belongs to the 2-oxoacid dehydrogenase family. In terms of assembly, forms a 24-polypeptide structural core with octahedral symmetry. It depends on (R)-lipoate as a cofactor.

The protein localises to the mitochondrion. It catalyses the reaction N(6)-[(R)-dihydrolipoyl]-L-lysyl-[protein] + succinyl-CoA = N(6)-[(R)-S(8)-succinyldihydrolipoyl]-L-lysyl-[protein] + CoA. It participates in amino-acid degradation; L-lysine degradation via saccharopine pathway; glutaryl-CoA from L-lysine: step 6/6. Functionally, the 2-oxoglutarate dehydrogenase complex catalyzes the overall conversion of 2-oxoglutarate to succinyl-CoA and CO(2). It contains multiple copies of three enzymatic components: 2-oxoglutarate dehydrogenase (E1), dihydrolipoamide succinyltransferase (E2) and lipoamide dehydrogenase (E3). The polypeptide is Dihydrolipoyllysine-residue succinyltransferase component of 2-oxoglutarate dehydrogenase complex 1, mitochondrial (Arabidopsis thaliana (Mouse-ear cress)).